A 436-amino-acid polypeptide reads, in one-letter code: GTPase Der (436 aa).

EngA-type G domains are found at residues Pro-4–Glu-167 and Val-176–Ser-351. GTP contacts are provided by residues Gly-10–Ser-17, Asp-57–Ile-61, Asn-119–Asp-122, Gly-182–Ser-189, Asp-229–Met-233, and Asn-294–Asp-297. The KH-like domain occupies Leu-352–Lys-436.

It belongs to the TRAFAC class TrmE-Era-EngA-EngB-Septin-like GTPase superfamily. EngA (Der) GTPase family. Associates with the 50S ribosomal subunit.

Functionally, GTPase that plays an essential role in the late steps of ribosome biogenesis. This is GTPase Der from Listeria welshimeri serovar 6b (strain ATCC 35897 / DSM 20650 / CCUG 15529 / CIP 8149 / NCTC 11857 / SLCC 5334 / V8).